Reading from the N-terminus, the 477-residue chain is Probable periplasmic serine endoprotease DegP-like (477 aa).

A signal peptide spans 1–27 (MSIPRLKSYLMMFAAVLMLGQVLTAQA). Catalysis depends on charge relay system residues histidine 117, aspartate 147, and serine 220. Substrate contacts are provided by residues 218-220 (GNS) and 275-279 (LGVVI). 2 consecutive PDZ domains span residues 264-355 (LKKD…IRNG) and 361-466 (DISV…LRQG).

The protein belongs to the peptidase S1C family.

Its subcellular location is the periplasm. It carries out the reaction Acts on substrates that are at least partially unfolded. The cleavage site P1 residue is normally between a pair of hydrophobic residues, such as Val-|-Val.. Its function is as follows. Might be efficient in the degradation of transiently denatured and unfolded proteins which accumulate in the periplasm following stress conditions. In Pseudomonas putida (strain ATCC 700007 / DSM 6899 / JCM 31910 / BCRC 17059 / LMG 24140 / F1), this protein is Probable periplasmic serine endoprotease DegP-like.